The chain runs to 652 residues: Carboxypeptidase Z (652 aa).

A signal peptide spans 1–18; it reads MPPPLPLLLLTVLVVAAA. In terms of domain architecture, FZ spans 27 to 160; the sequence is NPAGECHRPP…TREDEGCYDP (134 aa). 5 disulfide bridges follow: cysteine 43–cysteine 109, cysteine 51–cysteine 102, cysteine 93–cysteine 129, cysteine 118–cysteine 157, and cysteine 122–cysteine 146. One can recognise a Peptidase M14 domain in the interval 186-502; it reads SHHSYAQMVR…ESLLNFVETV (317 aa). Zn(2+)-binding residues include histidine 248 and glutamate 251. Asparagine 281 carries an N-linked (GlcNAc...) asparagine glycan. Histidine 380 is a binding site for Zn(2+). Glutamate 472 acts as the Proton donor/acceptor in catalysis. Residues 595–629 are disordered; it reads LRRTGPHDPLGGASSLGEATEPDPLRARRQPSADG.

The protein belongs to the peptidase M14 family. Requires Zn(2+) as cofactor. In terms of tissue distribution, in placenta, it is present within invasive trophoblasts and in the surrounding extracellular space. Also present in amnion cells, but is not readily apparent in the extracellular matrix of this cell type. Present in normal pituitary gland and neoplastic pituitary gland (especially POMC-, GH- and PRL-producing adenomas) (at protein level). Widely expressed.

The protein resides in the secreted. It is found in the extracellular space. The protein localises to the extracellular matrix. Its activity is regulated as follows. Inhibited by 2-mercaptomethyl-3-guanidinoethylthiopropanoic acid (MGTA) and guanidinoethylmercaptosuccinic acid (GEMSA). Inhibited by chelating agents such as EDTA and EGTA. Its function is as follows. Cleaves substrates with C-terminal arginine residues. Probably modulates the Wnt signaling pathway, by cleaving some undefined protein. May play a role in cleavage during prohormone processing. This Homo sapiens (Human) protein is Carboxypeptidase Z (CPZ).